The sequence spans 688 residues: Elongation factor G (688 aa).

Positions Glu-8–Thr-282 constitute a tr-type G domain. GTP-binding positions include Ala-17–Thr-24, Asp-81–His-85, and Asn-135–Asp-138.

This sequence belongs to the TRAFAC class translation factor GTPase superfamily. Classic translation factor GTPase family. EF-G/EF-2 subfamily.

It is found in the cytoplasm. Its function is as follows. Catalyzes the GTP-dependent ribosomal translocation step during translation elongation. During this step, the ribosome changes from the pre-translocational (PRE) to the post-translocational (POST) state as the newly formed A-site-bound peptidyl-tRNA and P-site-bound deacylated tRNA move to the P and E sites, respectively. Catalyzes the coordinated movement of the two tRNA molecules, the mRNA and conformational changes in the ribosome. The protein is Elongation factor G of Clostridioides difficile (strain 630) (Peptoclostridium difficile).